The sequence spans 204 residues: Phosphopantothenoylcysteine decarboxylase (204 aa).

FMN contacts are provided by residues Thr53 and 104–107 (DANT). Position 140 (Asn140) interacts with substrate. The active-site Proton donor is the Cys173.

Belongs to the HFCD (homooligomeric flavin containing Cys decarboxylase) superfamily. Homotrimer. The cofactor is FMN.

The catalysed reaction is N-[(R)-4-phosphopantothenoyl]-L-cysteine + H(+) = (R)-4'-phosphopantetheine + CO2. It functions in the pathway cofactor biosynthesis; coenzyme A biosynthesis; CoA from (R)-pantothenate: step 3/5. Its function is as follows. Catalyzes the decarboxylation of the cysteine moiety of 4-phosphopantothenoylcysteine to form 4'-phosphopantotheine and this reaction forms part of the biosynthesis of coenzyme A. This chain is Phosphopantothenoylcysteine decarboxylase (Ppcdc), found in Mus musculus (Mouse).